The primary structure comprises 159 residues: Protein Smg homolog (159 aa).

The protein belongs to the Smg family.

In Shewanella amazonensis (strain ATCC BAA-1098 / SB2B), this protein is Protein Smg homolog.